The sequence spans 93 residues: Class I hydrophobin SSP1 (93 aa).

Positions 1–26 (MKYITAISMLATAALTAATPLNGVEA) are cleaved as a signal peptide. Cystine bridges form between Cys39–Cys71, Cys47–Cys65, Cys48–Cys56, and Cys72–Cys89.

The protein belongs to the fungal hydrophobin family. As to quaternary structure, self-assembles to form functional amyloid fibrils called rodlets. Self-assembly into fibrillar rodlets occurs spontaneously at hydrophobic:hydrophilic interfaces and the rodlets further associate laterally to form amphipathic monolayers.

The protein localises to the secreted. Its subcellular location is the cell wall. Aerial growth, conidiation, and dispersal of filamentous fungi in the environment rely upon a capability of their secreting small amphipathic proteins called hydrophobins (HPBs) with low sequence identity. Class I can self-assemble into an outermost layer of rodlet bundles on aerial cell surfaces, conferring cellular hydrophobicity that supports fungal growth, development and dispersal; whereas Class II form highly ordered films at water-air interfaces through intermolecular interactions but contribute nothing to the rodlet structure. SSP1 is a class I hydrophobin that acts as an effector in the ericoid mycorrhizal interaction with Vaccinium myrtillus. May enhance attachment of the fungus to the root surface and protect the fungal hypha from plant defense compounds. This is Class I hydrophobin SSP1 from Oidiodendron maius (strain Zn).